Reading from the N-terminus, the 381-residue chain is Queuine tRNA-ribosyltransferase (381 aa).

Asp-92 acts as the Proton acceptor in catalysis. Substrate is bound by residues 92-96, Asp-146, Gln-190, and Gly-217; that span reads DSGGF. Residues 248–254 form an RNA binding region; sequence GVGRPED. Asp-267 acts as the Nucleophile in catalysis. The interval 272–276 is RNA binding; important for wobble base 34 recognition; it reads TRNAR. Zn(2+)-binding residues include Cys-305, Cys-307, Cys-310, and His-337.

This sequence belongs to the queuine tRNA-ribosyltransferase family. As to quaternary structure, homodimer. Within each dimer, one monomer is responsible for RNA recognition and catalysis, while the other monomer binds to the replacement base PreQ1. Zn(2+) is required as a cofactor.

The catalysed reaction is 7-aminomethyl-7-carbaguanine + guanosine(34) in tRNA = 7-aminomethyl-7-carbaguanosine(34) in tRNA + guanine. It participates in tRNA modification; tRNA-queuosine biosynthesis. Catalyzes the base-exchange of a guanine (G) residue with the queuine precursor 7-aminomethyl-7-deazaguanine (PreQ1) at position 34 (anticodon wobble position) in tRNAs with GU(N) anticodons (tRNA-Asp, -Asn, -His and -Tyr). Catalysis occurs through a double-displacement mechanism. The nucleophile active site attacks the C1' of nucleotide 34 to detach the guanine base from the RNA, forming a covalent enzyme-RNA intermediate. The proton acceptor active site deprotonates the incoming PreQ1, allowing a nucleophilic attack on the C1' of the ribose to form the product. After dissociation, two additional enzymatic reactions on the tRNA convert PreQ1 to queuine (Q), resulting in the hypermodified nucleoside queuosine (7-(((4,5-cis-dihydroxy-2-cyclopenten-1-yl)amino)methyl)-7-deazaguanosine). This is Queuine tRNA-ribosyltransferase from Xanthomonas axonopodis pv. citri (strain 306).